A 420-amino-acid polypeptide reads, in one-letter code: MASSSVPPATAPAAAGGPGPGFGFASKTKKKHFVQQKVKVFRAADPLVGVFLWGVAHSINELSQVPPPVMLLPDDFKASSKIKVNNHLFHRENLPSHFKFKEYCPQVFRNLRDRFAIDDHDYLVSLTRSPPSETEGSDGRFLISYDRTLVIKEVSSEDIADMHSNLSNYHQYIVKCHGNTLLPQFLGMYRVSVENEDSYMLVMRNMFSHRLPVHRKYDLKGSLVSREASDKEKVKELPTLKDMDFLNKNQKVYIGEEEKKVFLEKLKRDVEFLVQLKIMDYSLLLGIHDIIRGSEPEEEGPVREEESEWDGDCNLTGPPALVGSYGTSPEGIGGYIHSHRPLGPGEFESFIDVYAIRSAEGAPEGGVFHGLIDILTQYDAKKKAAHAAKTVKHGAGAEISTVHPEQYAKRFLDFISNIFA.

Residue A2 is modified to N-acetylalanine. Position 26 is a phosphoserine (S26). The PIPK domain maps to 43-419; sequence AADPLVGVFL…RFLDFISNIF (377 aa). A required for interaction with PIP5K1A region spans residues 69-75; that stretch reads VMLLPDD. S349 is modified (phosphoserine).

Interacts with PIP5K1A; the interaction inhibits PIP5K1A kinase activity. Post-translationally, phosphorylated, phosphorylation is induced by EGF. In terms of tissue distribution, widely expressed, with the most abundant expression in kidney.

The protein localises to the endoplasmic reticulum. It is found in the cytoplasm. It catalyses the reaction a 1,2-diacyl-sn-glycero-3-phospho-(1D-myo-inositol-5-phosphate) + ATP = a 1,2-diacyl-sn-glycero-3-phospho-(1D-myo-inositol-4,5-bisphosphate) + ADP + H(+). The enzyme catalyses 1,2-dihexadecanoyl-sn-glycero-3-phospho-(1D-myo-inositol-5-phosphate) + ATP = 1,2-dihexadecanoyl-sn-glycero-3-phospho-(1D-myo-inositol-4,5-bisphosphate) + ADP + H(+). It carries out the reaction 1,2-dihexadecanoyl-sn-glycero-3-phospho-(1D-myo-inositol-5-phosphate) + GTP = 1,2-dihexadecanoyl-sn-glycero-3-phospho-(1D-myo-inositol-4,5-bisphosphate) + GDP + H(+). Functionally, phosphatidylinositol 5-phosphate 4-kinase with low enzymatic activity. May be a GTP sensor, has higher GTP-dependent kinase activity than ATP-dependent kinase activity. PIP4Ks negatively regulate insulin signaling through a catalytic-independent mechanism. They interact with PIP5Ks and suppress PIP5K-mediated PtdIns(4,5)P2 synthesis and insulin-dependent conversion to PtdIns(3,4,5)P3. This is Phosphatidylinositol 5-phosphate 4-kinase type-2 gamma from Rattus norvegicus (Rat).